A 98-amino-acid polypeptide reads, in one-letter code: Large ribosomal subunit protein bL21 (98 aa).

It belongs to the bacterial ribosomal protein bL21 family. Part of the 50S ribosomal subunit. Contacts protein L20.

This protein binds to 23S rRNA in the presence of protein L20. In Aquifex aeolicus (strain VF5), this protein is Large ribosomal subunit protein bL21.